We begin with the raw amino-acid sequence, 108 residues long: Large ribosomal subunit protein bL21 (108 aa).

Belongs to the bacterial ribosomal protein bL21 family. Part of the 50S ribosomal subunit. Contacts protein L20.

This protein binds to 23S rRNA in the presence of protein L20. This Buchnera aphidicola subsp. Acyrthosiphon pisum (strain 5A) protein is Large ribosomal subunit protein bL21.